The primary structure comprises 464 residues: Potassium/proton antiporter CemA (464 aa).

The next 5 helical transmembrane spans lie at 36–56 (FSLS…TEIL), 241–261 (ASVS…QIAI), 341–361 (LLLR…LLIF), 389–409 (ILLL…EILV), and 425–445 (TPCF…YWIF).

Belongs to the CemA family.

The protein localises to the plastid. It localises to the chloroplast inner membrane. It carries out the reaction K(+)(in) + H(+)(out) = K(+)(out) + H(+)(in). Functionally, contributes to K(+)/H(+) antiport activity by supporting proton efflux to control proton extrusion and homeostasis in chloroplasts in a light-dependent manner to modulate photosynthesis. Prevents excessive induction of non-photochemical quenching (NPQ) under continuous-light conditions. Indirectly promotes efficient inorganic carbon uptake into chloroplasts. The polypeptide is Potassium/proton antiporter CemA (Adiantum capillus-veneris (Maidenhair fern)).